Reading from the N-terminus, the 581-residue chain is 2-succinyl-5-enolpyruvyl-6-hydroxy-3-cyclohexene-1-carboxylate synthase (581 aa).

This sequence belongs to the TPP enzyme family. MenD subfamily. Homodimer. It depends on Mg(2+) as a cofactor. Requires Mn(2+) as cofactor. Thiamine diphosphate is required as a cofactor.

The catalysed reaction is isochorismate + 2-oxoglutarate + H(+) = 5-enolpyruvoyl-6-hydroxy-2-succinyl-cyclohex-3-ene-1-carboxylate + CO2. It participates in quinol/quinone metabolism; 1,4-dihydroxy-2-naphthoate biosynthesis; 1,4-dihydroxy-2-naphthoate from chorismate: step 2/7. Its pathway is cofactor biosynthesis; phylloquinone biosynthesis. Catalyzes the thiamine diphosphate-dependent decarboxylation of 2-oxoglutarate and the subsequent addition of the resulting succinic semialdehyde-thiamine pyrophosphate anion to isochorismate to yield 2-succinyl-5-enolpyruvyl-6-hydroxy-3-cyclohexene-1-carboxylate (SEPHCHC). In Gloeothece citriformis (strain PCC 7424) (Cyanothece sp. (strain PCC 7424)), this protein is 2-succinyl-5-enolpyruvyl-6-hydroxy-3-cyclohexene-1-carboxylate synthase.